The primary structure comprises 1036 residues: KAT8 regulatory NSL complex subunit 1 (1036 aa).

The residue at position 104 (lysine 104) is an N6-acetyllysine. Disordered regions lie at residues 145–211 (GQTA…CTLP) and 226–257 (NSTA…SSSN). Polar residues predominate over residues 226-244 (NSTANKSSVNSMDQPALQG). Residues 245–256 (SSRLSPSTDSSS) are compositionally biased toward low complexity. Serine 249 is subject to Phosphoserine. Lysine 262 is covalently cross-linked (Glycyl lysine isopeptide (Lys-Gly) (interchain with G-Cter in SUMO2)). A Phosphoserine modification is found at serine 268. Positions 285–312 (TALLRRQADIEIRARRLQKRLQVVQAKQ) form a coiled coil. Lysine 331 participates in a covalent cross-link: Glycyl lysine isopeptide (Lys-Gly) (interchain with G-Cter in SUMO2). Disordered regions lie at residues 399–423 (DSDV…RADP) and 739–787 (SPSY…RRRG). Residues 759-772 (STSSDTSTPTSSGS) show a composition bias toward low complexity. Residues 781 to 813 (PVRRRRGESSFDINNIVIPMSVAATTRVEKLQY) are required for activation of KAT8 histone acetyltransferase activity. Residues 815 to 966 (EILTPSWREV…GLDEQSVQPW (152 aa)) enclose the PEHE domain. The segment at 841–859 (EDLSDAAFAALHAKCEEME) is interaction with KAT8 HAT domain. The disordered stretch occupies residues 869-931 (VPPQRRGSRS…SPISPELHSA (63 aa)). Residues 886 to 896 (TTPQLGSANPS) are compositionally biased toward polar residues. The segment covering 906–919 (SSSHSLSEFSHGQS) has biased composition (low complexity). Phosphoserine is present on residues serine 922 and serine 925. Threonine 934 carries the post-translational modification Phosphothreonine. Serine 976 bears the Phosphoserine mark. A disordered region spans residues 989 to 1020 (DTAARCTRRTSGSKTGREAEVAPTSPPVVPLK).

Component of the NSL complex at least composed of MOF/KAT8, KANSL1, KANSL2, KANSL3, MCRS1, PHF20, OGT1/OGT, WDR5 and HCFC1. Interacts (via PEHE domain) with KAT8 (via HAT domain); the interaction is direct. Component of some MLL1/MLL complex, at least composed of the core components KMT2A/MLL1, ASH2L, HCFC1, WDR5 and RBBP5, as well as the facultative components BACC1, CHD8, E2F6, HSP70, INO80C, KANSL1, LAS1L, MAX, MCRS1, MGA, KAT8/MOF, PELP1, PHF20, PRP31, RING2, RUVB1/TIP49A, RUVB2/TIP49B, SENP3, TAF1, TAF4, TAF6, TAF7, TAF9 and TEX10.

It is found in the nucleus. Its subcellular location is the chromosome. The protein resides in the centromere. The protein localises to the kinetochore. It localises to the mitochondrion. It is found in the cytoplasm. Its subcellular location is the cytoskeleton. The protein resides in the spindle pole. Its function is as follows. Non-catalytic component of the NSL histone acetyltransferase complex, a multiprotein complex that mediates histone H4 acetylation at 'Lys-5'- and 'Lys-8' (H4K5ac and H4K8ac) at transcription start sites and promotes transcription initiation. The NSL complex also acts as a regulator of gene expression in mitochondria. In addition to its role in transcription, KANSL1 also plays an essential role in spindle assembly during mitosis. Associates with microtubule ends and contributes to microtubule stability. The sequence is that of KAT8 regulatory NSL complex subunit 1 (Kansl1) from Mus musculus (Mouse).